The following is a 253-amino-acid chain: MGQKVNPTGFRLGIIRDWTSRWYDDSPVISEKIKQDHIIRNYVLARLKKERAGIARINIERTTKHVKINIYAARPGAVVGRKGEEINNLSQELSRIIGKEVKIDVVEVIKPEIEAQLIGENIAYQLENRVSFRRAMKQAIQQAMRAGAEGVRIRCAGRLGGAEIARAEQYKEGKIPLHTIRANVDYASVTAHTIAGTIGIKVWVYKGEVLVQRIDAIEEDEMKKMKDRRNDGGAKGRDSRDNRSKRRSRSKRS.

The region spanning 39 to 109 (IRNYVLARLK…EVKIDVVEVI (71 aa)) is the KH type-2 domain. The segment at 220–253 (DEMKKMKDRRNDGGAKGRDSRDNRSKRRSRSKRS) is disordered. The segment covering 221-242 (EMKKMKDRRNDGGAKGRDSRDN) has biased composition (basic and acidic residues). Residues 243–253 (RSKRRSRSKRS) are compositionally biased toward basic residues.

This sequence belongs to the universal ribosomal protein uS3 family. Part of the 30S ribosomal subunit. Forms a tight complex with proteins S10 and S14.

Binds the lower part of the 30S subunit head. Binds mRNA in the 70S ribosome, positioning it for translation. This Chlorobium chlorochromatii (strain CaD3) protein is Small ribosomal subunit protein uS3.